The sequence spans 92 residues: Putative defensin-like protein 251 (92 aa).

An N-terminal signal peptide occupies residues 1 to 27; that stretch reads MRCVTSFVVFCILMFFVLNIFTVEVKA. Cystine bridges form between cysteine 34/cysteine 90, cysteine 45/cysteine 69, cysteine 53/cysteine 82, and cysteine 67/cysteine 84.

Belongs to the DEFL family.

The protein resides in the secreted. The protein is Putative defensin-like protein 251 (SCRL12) of Arabidopsis thaliana (Mouse-ear cress).